A 224-amino-acid polypeptide reads, in one-letter code: Zinc finger protein 22 (224 aa).

The disordered stretch occupies residues 1–34 (MRLAKPKAGISRSSSQGKAYENKRKTGRQRQKWG). N6-acetyllysine is present on residues lysine 18 and lysine 23. Serine 49 carries the phosphoserine modification. 5 C2H2-type zinc fingers span residues 55–77 (YKCTECEKSFSQSSTLFQHQKIH), 83–105 (HKCADCGKSFFQSSNLIQHRRIH), 111–133 (YKCDECGESFKQSSNLIQHQRIH), 139–161 (YQCDECGRCFSQSSHLIQHQRTH), and 167–189 (YQCSECGKCFSQSSHLRQHMKVH).

Belongs to the krueppel C2H2-type zinc-finger protein family. In terms of tissue distribution, in the embryo, expressed in developing craniofacial structures including dental epithelium of maxillary molar tooth organs, tongue epithelium and muscle, and craniofacial bone osteoblasts. In the adult, expressed in mesoderm-derived tissues such as skeletal muscle, heart, kidney and liver. Intermediate expression in spleen, thymus and brain. Low levels in endoderm-derived tissues such as intestine and colon.

The protein localises to the nucleus. In terms of biological role, binds DNA through the consensus sequence 5'-CAATG-3'. May be involved in transcriptional regulation and may play a role in tooth formation. This chain is Zinc finger protein 22 (ZNF22), found in Homo sapiens (Human).